The primary structure comprises 261 residues: MEYFDAHCHLNCEPLLEQHEKSLANFRLIGLKANVVGTNLTNSQIAVNLAKQHPDLLKAGVGIHPNDVQLFDLKAAQATLKKLVSTHRSFISCIGEYGFDYHYTKDYITQQEQFFLMQFQLAEQYQLVHMLHVRDVHERIYEVLKRLKPKQPVVFHCFSEDTNTALKLLTLREVGLKVYFSIPGIVTFKNAKNLQAALSVIPTELLLSETDSPYLAPVPFRGKTNWPECVVHTVQTIADIKQVPLAEIKQAIVHNAKKLFW.

6 residues coordinate a divalent metal cation: His7, His9, Glu96, His132, His156, and Asp211.

Belongs to the metallo-dependent hydrolases superfamily. TatD-type hydrolase family. A divalent metal cation serves as cofactor.

This is an uncharacterized protein from Mycoplasma pneumoniae (strain ATCC 29342 / M129 / Subtype 1) (Mycoplasmoides pneumoniae).